The chain runs to 283 residues: MAQTLAQTKQISQSHTFDVSQSHHKTPNDTNSHSVIYSTQNLDLWYGENHALQNINLDIYENQITAIIGPSGCGKSTYIKTLNRMVELVPTVKTAGKILYRDQDIFDQKYSKEQLRTNVGMVFQQPNPFPKSIYDNITYGPKIHGIKNKKVLDEIVEKSLRGAAIWDELKDRLHTNAYSLSGGQQQRVCIARCLAIEPEVILMDEPTSALDPISTLRVEELVQELKEKYTIIMVTHNMQQAARVSDKTAFFLNGYVNEYDDTDKIFSNPSNKKTEDYISGRFG.

The segment covering 1–20 (MAQTLAQTKQISQSHTFDVS) has biased composition (polar residues). Residues 1–33 (MAQTLAQTKQISQSHTFDVSQSHHKTPNDTNSH) form a disordered region. Residues 37–278 (YSTQNLDLWY…PSNKKTEDYI (242 aa)) enclose the ABC transporter domain. 69 to 76 (GPSGCGKS) is a binding site for ATP.

Belongs to the ABC transporter superfamily. Phosphate importer (TC 3.A.1.7) family. In terms of assembly, the complex is composed of two ATP-binding proteins (PstB), two transmembrane proteins (PstC and PstA) and a solute-binding protein (PstS).

Its subcellular location is the cell membrane. The catalysed reaction is phosphate(out) + ATP + H2O = ADP + 2 phosphate(in) + H(+). Part of the ABC transporter complex PstSACB involved in phosphate import. Responsible for energy coupling to the transport system. The chain is Phosphate import ATP-binding protein PstB from Staphylococcus aureus (strain bovine RF122 / ET3-1).